A 357-amino-acid polypeptide reads, in one-letter code: Cyclic AMP-responsive element-binding protein 5 (357 aa).

The tract at residues 114–239 (RQDQTPHHHL…FLERNRAAAT (126 aa)) is disordered. Basic residues-rich tracts occupy residues 120 to 129 (HHHLHSHPHQ) and 138 to 175 (PYPHQHQHPAHHPHPQPHHQQNHPHHHSHSHLHAHPAH). The segment covering 186 to 195 (TGNQAQVSPA) has biased composition (polar residues). Low complexity predominate over residues 196–206 (TQQMQPTQTIQ). Basic and acidic residues predominate over residues 218-235 (VVDEDPDERRRKFLERNR). Positions 224-287 (DERRRKFLER…AQLKQLLLTH (64 aa)) constitute a bZIP domain. The basic motif stretch occupies residues 226–246 (RRRKFLERNRAAATRCRQKRK). A leucine-zipper region spans residues 252–280 (LEKKAEELTQTNMQLQNEVSMLKNEVAQL). Residues 298 to 318 (ESQGYLSPESSPPASPVPACS) form a disordered region.

This sequence belongs to the bZIP family. In terms of assembly, binds DNA as a homodimer or as a heterodimer with JUN or ATF2/CREBP1.

The protein localises to the nucleus. Binds to the cAMP response element and activates transcription. In Mus musculus (Mouse), this protein is Cyclic AMP-responsive element-binding protein 5 (Creb5).